The sequence spans 679 residues: Protein hook (679 aa).

The interval M1–E155 is interaction with microtubules. Residues N6–A123 enclose the Calponin-homology (CH) domain. Coiled-coil stretches lie at residues E135–G437 and Q480–L574.

Belongs to the hook family. Homodimer. Interacts with microtubules via its N-terminus.

Its subcellular location is the cytoplasm. It is found in the cytoskeleton. The protein localises to the endosome. It localises to the synapse. In terms of biological role, involved in endocytic trafficking by stabilizing organelles of the endocytic pathway. Probably acts as a cytoskeletal linker protein required to tether endosome vesicles to the cytoskeleton. Involved in modulation of endocytosis at stages required for down-regulation of membrane proteins that control synapse size. Not involved in synaptic vesicle recycling. Required in R7 cells for boss endocytosis into multivesicular bodies (MVBs). Has a role in regulating adult longevity. This is Protein hook from Drosophila melanogaster (Fruit fly).